The chain runs to 156 residues: Endoribonuclease YbeY (156 aa).

Zn(2+) contacts are provided by H122, H126, and H132.

It belongs to the endoribonuclease YbeY family. It depends on Zn(2+) as a cofactor.

Its subcellular location is the cytoplasm. Its function is as follows. Single strand-specific metallo-endoribonuclease involved in late-stage 70S ribosome quality control and in maturation of the 3' terminus of the 16S rRNA. This is Endoribonuclease YbeY from Bacillus mycoides (strain KBAB4) (Bacillus weihenstephanensis).